We begin with the raw amino-acid sequence, 298 residues long: Cyclin-dependent kinase 2 homolog (298 aa).

Residues 4-284 enclose the Protein kinase domain; sequence YHKMEKIGEG…AKEALKHDYF (281 aa). Residues 10–18 and Lys32 each bind ATP; that span reads IGEGTYGVV. Thr14 is modified (phosphothreonine). The residue at position 15 (Tyr15) is a Phosphotyrosine. Asp125 acts as the Proton acceptor in catalysis. Residue Thr158 is modified to Phosphothreonine.

Belongs to the protein kinase superfamily. CMGC Ser/Thr protein kinase family. CDC2/CDKX subfamily. As to quaternary structure, may form a complex composed of at least the catalytic subunit CRK2 and a cyclin. Mg(2+) serves as cofactor.

It is found in the cytoplasm. The enzyme catalyses L-seryl-[protein] + ATP = O-phospho-L-seryl-[protein] + ADP + H(+). The catalysed reaction is L-threonyl-[protein] + ATP = O-phospho-L-threonyl-[protein] + ADP + H(+). It catalyses the reaction [DNA-directed RNA polymerase] + ATP = phospho-[DNA-directed RNA polymerase] + ADP + H(+). With respect to regulation, phosphorylation at Thr-14 or Tyr-15 inactivates the enzyme, while phosphorylation at Thr-158 activates it. Serine/threonine-protein kinase. Involved in the control of the cell cycle. Required for entry into S-phase and mitosis. Probable component of the kinase complex that phosphorylates the repetitive C-terminus of RNA polymerase II. This is Cyclin-dependent kinase 2 homolog from Theileria annulata.